We begin with the raw amino-acid sequence, 601 residues long: Ubiquilin-4 (601 aa).

A Ubiquitin-like domain is found at 13 to 87 (IRVTVKTPKD…VHLVIKTPQK (75 aa)). Residues lysine 23 and lysine 62 each participate in a glycyl lysine isopeptide (Lys-Gly) (interchain with G-Cter in SUMO2) cross-link. Residues 87–155 (KAQDPAAATA…GAGEGSPSAT (69 aa)) are disordered. Positions 88–138 (AQDPAAATASSPSTPDPASAPSTTPASPATPAQPSTSGSASSDAGSGSRRS) are enriched in low complexity. A phosphoserine mark is found at serine 98 and serine 144. A compositionally biased stretch (gly residues) spans 139–149 (SGGGPSPGAGE). STI1 domains lie at 192–229 (NPEMLSQIMENPLVQDMMSNPDLMRHMIMANPQMQQLM) and 230–261 (ERNPEISHMLNNPELMRQTMELARNPAMMQEM). Threonine 287 is modified (phosphothreonine). The disordered stretch occupies residues 301 to 366 (FGNNPFSSLA…QVHPTVSNPF (66 aa)). Positions 307–318 (SSLAGNSDSSSS) are enriched in low complexity. The residue at position 318 (serine 318) is a Phosphoserine; by ATM. Over residues 329 to 340 (LPNPWSPSPPTS) the composition is skewed to pro residues. The span at 344–354 (GSGGEGTGGSG) shows a compositional bias: gly residues. Polar residues predominate over residues 357 to 366 (QVHPTVSNPF). STI1 domains lie at 393 to 440 (NPQL…QEQL) and 444 to 476 (LPVFLQQMQNPESLSILTNPRAMQALLQIQQGL). The disordered stretch occupies residues 490-533 (LGSFGISRTPAPSAGSNAGSTPEAPTSSPATPATSSPTGASSAQ). Over residues 507–533 (AGSTPEAPTSSPATPATSSPTGASSAQ) the composition is skewed to low complexity. The UBA domain occupies 553 to 598 (QTPEVRFQQQLEQLNSMGFINREANLQALIATGGDINAAIERLLGS).

Homooligomer. Binds signal sequences of proteins that are targeted to the endoplasmic reticulum. Interacts (via UBA domain) with GJA1 (not ubiquitinated) and with ubiquitin; both compete for the same binding site. Interacts (via UBA domain) with ubiquitin and with polyubiquitin chains. Interacts (via ubiquitin-like domain) with PSMD2 and PSMD4, regulatory subunits of the 26S proteasome. Interacts with ATXN1/SCA1; interaction with ATXN1 inhibits polyubiquitination of UBQLN4 and interferes with PSMD4 binding. Interacts with HERPUD1. Interacts (via ubiquitin-like domain) with UBQLN1 (via UBA domain). Interacts with UBQLN2. Interacts (via STI1 1 and 2 domains) with MAP1LC3A/B/C. Interacts with BAG6. Interacts with MRE11 (when ubiquitinated); interaction with ubiquitinated MRE11 leads to MRE11 removal from chromatin. Interacts with DESI1/POST; leading to nuclear export. Interacts with BCL2A1 and BCL2L10. In terms of assembly, (Microbial infection) Interacts with Mumps virus protein SH. In terms of processing, phosphorylated by ATM at Ser-318 in response to DNA damage, leading to localization in the nucleus and recruitment to sites of DNA damage. Post-translationally, ubiquitinated; this does not lead to proteasomal degradation. May undergo both 'Lys-48'- and 'Lys-63'-linked polyubiquitination. In terms of tissue distribution, highly expressed in pancreas, kidney, skeletal muscle, heart and throughout the brain, and at lower levels in placenta, lung and liver.

The protein resides in the nucleus. It is found in the cytoplasm. Its subcellular location is the chromosome. It localises to the endoplasmic reticulum. The protein localises to the perinuclear region. The protein resides in the cytoplasmic vesicle. It is found in the autophagosome. Functionally, regulator of protein degradation that mediates the proteasomal targeting of misfolded, mislocalized or accumulated proteins. Acts by binding polyubiquitin chains of target proteins via its UBA domain and by interacting with subunits of the proteasome via its ubiquitin-like domain. Key regulator of DNA repair that represses homologous recombination repair: in response to DNA damage, recruited to sites of DNA damage following phosphorylation by ATM and acts by binding and removing ubiquitinated MRE11 from damaged chromatin, leading to MRE11 degradation by the proteasome. MRE11 degradation prevents homologous recombination repair, redirecting double-strand break repair toward non-homologous end joining (NHEJ). Specifically recognizes and binds mislocalized transmembrane-containing proteins and targets them to proteasomal degradation. Collaborates with DESI1/POST in the export of ubiquitinated proteins from the nucleus to the cytoplasm. Also plays a role in the regulation of the proteasomal degradation of non-ubiquitinated GJA1. Acts as an adapter protein that recruits UBQLN1 to the autophagy machinery. Mediates the association of UBQLN1 with autophagosomes and the autophagy-related protein LC3 (MAP1LC3A/B/C) and may assist in the maturation of autophagosomes to autolysosomes by mediating autophagosome-lysosome fusion. This is Ubiquilin-4 from Homo sapiens (Human).